The primary structure comprises 462 residues: Fez family zinc finger protein 1 (462 aa).

The Engrailed homology 1 repressor signature appears at 34–49 (PLAFSIERIMSRTPEP). C2H2-type zinc fingers lie at residues 260–282 (FTCEVCGKVFNAHYNLTRHMPVH), 288–310 (FVCKICGKGFRQASTLCRHKIIH), 316–338 (HKCNQCGKAFNRSSTLNTHTRIH), 344–366 (FVCEFCGKGFHQKGNYKNHKLTH), 372–394 (FKCNICNKAFHQIYNLTFHMHTH), and 400–423 (FTCPTCGKGFCRNFDLKKHVRKLH). The tract at residues 441–462 (LLLPNREPSPTIQSPQLQKSGY) is disordered. Polar residues predominate over residues 448-462 (PSPTIQSPQLQKSGY).

This sequence belongs to the krueppel C2H2-type zinc-finger protein family.

Its subcellular location is the nucleus. In terms of biological role, transcription repressor. Involved in the development of the forebrain region. This Xenopus tropicalis (Western clawed frog) protein is Fez family zinc finger protein 1 (fezf1).